The primary structure comprises 298 residues: UDP-N-acetylenolpyruvoylglucosamine reductase (298 aa).

In terms of domain architecture, FAD-binding PCMH-type spans 27–191 (TGGNADVFVM…LDATFSLELE (165 aa)). The active site involves Arg170. Ser220 (proton donor) is an active-site residue. Glu290 is a catalytic residue.

Belongs to the MurB family. It depends on FAD as a cofactor.

The protein localises to the cytoplasm. The catalysed reaction is UDP-N-acetyl-alpha-D-muramate + NADP(+) = UDP-N-acetyl-3-O-(1-carboxyvinyl)-alpha-D-glucosamine + NADPH + H(+). The protein operates within cell wall biogenesis; peptidoglycan biosynthesis. Cell wall formation. The chain is UDP-N-acetylenolpyruvoylglucosamine reductase from Listeria innocua serovar 6a (strain ATCC BAA-680 / CLIP 11262).